Here is a 314-residue protein sequence, read N- to C-terminus: RNA 2',3'-cyclic phosphodiesterase (314 aa).

Residue His43 is the Proton donor of the active site. Short sequence motifs (HXTX) lie at residues 43–46 (HITL) and 129–132 (HITI). His129 acts as the Proton acceptor in catalysis.

It belongs to the 2H phosphoesterase superfamily. ThpR family.

The enzyme catalyses a 3'-end 2',3'-cyclophospho-ribonucleotide-RNA + H2O = a 3'-end 2'-phospho-ribonucleotide-RNA + H(+). Functionally, hydrolyzes RNA 2',3'-cyclic phosphodiester to an RNA 2'-phosphomonoester. The protein is RNA 2',3'-cyclic phosphodiesterase of Geobacillus stearothermophilus (Bacillus stearothermophilus).